A 37-amino-acid polypeptide reads, in one-letter code: Large ribosomal subunit protein bL36 (37 aa).

This sequence belongs to the bacterial ribosomal protein bL36 family.

This Synechococcus elongatus (strain ATCC 33912 / PCC 7942 / FACHB-805) (Anacystis nidulans R2) protein is Large ribosomal subunit protein bL36.